Consider the following 1080-residue polypeptide: Carbamoyl phosphate synthase large chain (1080 aa).

The carboxyphosphate synthetic domain stretch occupies residues 1–403 (MPKRTDLRTI…SLQKAVRGLE (403 aa)). Arg129, Arg169, Gly175, Gly176, Glu208, Val210, Glu215, Gly241, Val242, His243, Gln285, and Glu299 together coordinate ATP. The ATP-grasp 1 domain maps to 133–328 (RVAMQEIGLE…IAKIAAKLAV (196 aa)). Mg(2+) is bound by residues Gln285, Glu299, and Asn301. Mn(2+) is bound by residues Gln285, Glu299, and Asn301. The oligomerization domain stretch occupies residues 404–554 (TGKVGLEPTG…YSTYEEECEA (151 aa)). The carbamoyl phosphate synthetic domain stretch occupies residues 555-942 (APSDRRKIMI…AFARAQEAGD (388 aa)). In terms of domain architecture, ATP-grasp 2 spans 679 to 876 (QRLVQQLGLR…LAKIAARCMT (198 aa)). The ATP site is built by Arg715, Arg754, Leu756, Glu761, Gly787, Val788, His789, Ser790, Gln830, and Glu847. 3 residues coordinate Mg(2+): Gln830, Glu847, and Asn849. Residues Gln830, Glu847, and Asn849 each coordinate Mn(2+). The MGS-like domain occupies 943–1080 (IRAPQPGRAF…LQELHKELQV (138 aa)). Positions 943–1080 (IRAPQPGRAF…LQELHKELQV (138 aa)) are allosteric domain.

Belongs to the CarB family. Composed of two chains; the small (or glutamine) chain promotes the hydrolysis of glutamine to ammonia, which is used by the large (or ammonia) chain to synthesize carbamoyl phosphate. Tetramer of heterodimers (alpha,beta)4. Requires Mg(2+) as cofactor. The cofactor is Mn(2+).

It carries out the reaction hydrogencarbonate + L-glutamine + 2 ATP + H2O = carbamoyl phosphate + L-glutamate + 2 ADP + phosphate + 2 H(+). The catalysed reaction is hydrogencarbonate + NH4(+) + 2 ATP = carbamoyl phosphate + 2 ADP + phosphate + 2 H(+). The protein operates within amino-acid biosynthesis; L-arginine biosynthesis; carbamoyl phosphate from bicarbonate: step 1/1. Its pathway is pyrimidine metabolism; UMP biosynthesis via de novo pathway; (S)-dihydroorotate from bicarbonate: step 1/3. Large subunit of the glutamine-dependent carbamoyl phosphate synthetase (CPSase). CPSase catalyzes the formation of carbamoyl phosphate from the ammonia moiety of glutamine, carbonate, and phosphate donated by ATP, constituting the first step of 2 biosynthetic pathways, one leading to arginine and/or urea and the other to pyrimidine nucleotides. The large subunit (synthetase) binds the substrates ammonia (free or transferred from glutamine from the small subunit), hydrogencarbonate and ATP and carries out an ATP-coupled ligase reaction, activating hydrogencarbonate by forming carboxy phosphate which reacts with ammonia to form carbamoyl phosphate. The chain is Carbamoyl phosphate synthase large chain from Xylella fastidiosa (strain Temecula1 / ATCC 700964).